The following is a 251-amino-acid chain: Pyrroloquinoline-quinone synthase (251 aa).

This sequence belongs to the PqqC family.

It carries out the reaction 6-(2-amino-2-carboxyethyl)-7,8-dioxo-1,2,3,4,7,8-hexahydroquinoline-2,4-dicarboxylate + 3 O2 = pyrroloquinoline quinone + 2 H2O2 + 2 H2O + H(+). Its pathway is cofactor biosynthesis; pyrroloquinoline quinone biosynthesis. In terms of biological role, ring cyclization and eight-electron oxidation of 3a-(2-amino-2-carboxyethyl)-4,5-dioxo-4,5,6,7,8,9-hexahydroquinoline-7,9-dicarboxylic-acid to PQQ. The chain is Pyrroloquinoline-quinone synthase from Pseudomonas putida (strain GB-1).